A 413-amino-acid polypeptide reads, in one-letter code: Arginine biosynthesis bifunctional protein ArgJ (413 aa).

Positions 154, 180, 191, 277, 408, and 413 each coordinate substrate. The Nucleophile role is filled by Thr191.

Belongs to the ArgJ family. In terms of assembly, heterotetramer of two alpha and two beta chains.

It is found in the cytoplasm. It catalyses the reaction N(2)-acetyl-L-ornithine + L-glutamate = N-acetyl-L-glutamate + L-ornithine. The catalysed reaction is L-glutamate + acetyl-CoA = N-acetyl-L-glutamate + CoA + H(+). Its pathway is amino-acid biosynthesis; L-arginine biosynthesis; L-ornithine and N-acetyl-L-glutamate from L-glutamate and N(2)-acetyl-L-ornithine (cyclic): step 1/1. The protein operates within amino-acid biosynthesis; L-arginine biosynthesis; N(2)-acetyl-L-ornithine from L-glutamate: step 1/4. Catalyzes two activities which are involved in the cyclic version of arginine biosynthesis: the synthesis of N-acetylglutamate from glutamate and acetyl-CoA as the acetyl donor, and of ornithine by transacetylation between N(2)-acetylornithine and glutamate. This is Arginine biosynthesis bifunctional protein ArgJ from Synechocystis sp. (strain ATCC 27184 / PCC 6803 / Kazusa).